A 506-amino-acid chain; its full sequence is Deoxyguanosinetriphosphate triphosphohydrolase (506 aa).

An HD domain is found at 66–274 (RLTHSLEVQQ…MEAADDISYC (209 aa)).

The protein belongs to the dGTPase family. Type 1 subfamily. In terms of assembly, homotetramer. Requires Mg(2+) as cofactor.

It carries out the reaction dGTP + H2O = 2'-deoxyguanosine + triphosphate + H(+). Its function is as follows. dGTPase preferentially hydrolyzes dGTP over the other canonical NTPs. In Yersinia pestis bv. Antiqua (strain Antiqua), this protein is Deoxyguanosinetriphosphate triphosphohydrolase.